The chain runs to 1065 residues: DNA-directed RNA polymerase subunit beta (1065 aa).

This sequence belongs to the RNA polymerase beta chain family. As to quaternary structure, in plastids the minimal PEP RNA polymerase catalytic core is composed of four subunits: alpha, beta, beta', and beta''. When a (nuclear-encoded) sigma factor is associated with the core the holoenzyme is formed, which can initiate transcription.

It is found in the plastid. The protein resides in the chloroplast. It catalyses the reaction RNA(n) + a ribonucleoside 5'-triphosphate = RNA(n+1) + diphosphate. Functionally, DNA-dependent RNA polymerase catalyzes the transcription of DNA into RNA using the four ribonucleoside triphosphates as substrates. The protein is DNA-directed RNA polymerase subunit beta of Marchantia polymorpha (Common liverwort).